The following is a 323-amino-acid chain: 8-oxo-dGDP phosphatase NUDT18 (323 aa).

One can recognise a Nudix hydrolase domain in the interval Arg37 to Ala167. Leu58 lines the Mg(2+) pocket. The Nudix box signature appears at Gly76–Gly97.

The protein belongs to the Nudix hydrolase family. Mn(2+) serves as cofactor. The cofactor is Mg(2+).

It catalyses the reaction 8-oxo-dGDP + H2O = 8-oxo-dGMP + phosphate + H(+). It carries out the reaction 8-oxo-dADP + H2O = 8-oxo-dAMP + phosphate + H(+). The catalysed reaction is 2-oxo-dADP + H2O = 2-oxo-dAMP + phosphate + H(+). The enzyme catalyses 8-oxo-GDP + H2O = 8-oxo-GMP + phosphate + H(+). Its function is as follows. Mediates the hydrolysis of oxidized nucleoside diphosphate derivatives. Hydrolyzes 8-oxo-7,8-dihydroguanine (8-oxo-Gua)-containing deoxyribo- and ribonucleoside diphosphates to the monophosphates. Hydrolyzes 8-oxo-dGDP and 8-oxo-GDP with the same efficiencies. Also hydrolyzes 8-OH-dADP and 2-OH-dADP. Exhibited no or minimal hydrolysis activity against 8-oxo-dGTP, 8-oxo-GTP, dGTP, GTP, dGDP and GDP. Probably removes oxidized guanine nucleotides from both the DNA and RNA precursor pools. The sequence is that of 8-oxo-dGDP phosphatase NUDT18 from Homo sapiens (Human).